A 219-amino-acid chain; its full sequence is Chloramphenicol acetyltransferase (219 aa).

The Proton acceptor role is filled by histidine 193.

This sequence belongs to the chloramphenicol acetyltransferase family. Homotrimer.

The catalysed reaction is chloramphenicol + acetyl-CoA = chloramphenicol 3-acetate + CoA. This enzyme is an effector of chloramphenicol resistance in bacteria. This is Chloramphenicol acetyltransferase (cat) from Klebsiella sp.